Reading from the N-terminus, the 453-residue chain is Serine--tRNA ligase (453 aa).

L-serine is bound at residue 249–251 (TSE). Residues 280-282 (RKE) and V296 contribute to the ATP site. L-serine is bound at residue E303. 367 to 370 (EMVS) serves as a coordination point for ATP. Residue T404 coordinates L-serine.

Belongs to the class-II aminoacyl-tRNA synthetase family. Type-1 seryl-tRNA synthetase subfamily. Homodimer. The tRNA molecule binds across the dimer.

Its subcellular location is the cytoplasm. It catalyses the reaction tRNA(Ser) + L-serine + ATP = L-seryl-tRNA(Ser) + AMP + diphosphate + H(+). The enzyme catalyses tRNA(Sec) + L-serine + ATP = L-seryl-tRNA(Sec) + AMP + diphosphate + H(+). The protein operates within aminoacyl-tRNA biosynthesis; selenocysteinyl-tRNA(Sec) biosynthesis; L-seryl-tRNA(Sec) from L-serine and tRNA(Sec): step 1/1. In terms of biological role, catalyzes the attachment of serine to tRNA(Ser). Is also able to aminoacylate tRNA(Sec) with serine, to form the misacylated tRNA L-seryl-tRNA(Sec), which will be further converted into selenocysteinyl-tRNA(Sec). The chain is Serine--tRNA ligase from Archaeoglobus fulgidus (strain ATCC 49558 / DSM 4304 / JCM 9628 / NBRC 100126 / VC-16).